The following is a 439-amino-acid chain: Chitinase-like protein Idgf1 (439 aa).

An N-terminal signal peptide occupies residues 1-20 (MRFQLFYILGLLSVTSLTHA). The region spanning 22 to 439 (SNLICYYDSN…ILRSIKYFMG (418 aa)) is the GH18 domain. Cys-26 and Cys-53 form a disulfide bridge. Asn-122, Asn-218, and Asn-346 each carry an N-linked (GlcNAc...) asparagine glycan. Residues Cys-340 and Cys-423 are joined by a disulfide bond.

The protein belongs to the glycosyl hydrolase 18 family. IDGF subfamily. Primarily expressed in yolk cells and fat body. In larvae, it is expressed in large salivary gland cells and weakly expressed in imaginal disks. Less expressed than Idgf2 and Idgf4.

It localises to the secreted. Its function is as follows. Cooperates with insulin-like peptides to stimulate the proliferation, polarization and motility of imaginal disk cells. May act by stabilizing the binding of insulin-like peptides to its receptor through a simultaneous interaction with both molecules to form a multiprotein signaling complex. The sequence is that of Chitinase-like protein Idgf1 (Idgf1) from Drosophila melanogaster (Fruit fly).